A 475-amino-acid polypeptide reads, in one-letter code: 23S rRNA (uracil(1939)-C(5))-methyltransferase RlmD (475 aa).

The TRAM domain maps to 1 to 76 (MHRGDKPVNI…SRFSKAKVRE (76 aa)). [4Fe-4S] cluster is bound by residues C89, C95, C98, and C178. Residues Q299, F328, N333, E349, D377, and D398 each contribute to the S-adenosyl-L-methionine site. C431 serves as the catalytic Nucleophile.

Belongs to the class I-like SAM-binding methyltransferase superfamily. RNA M5U methyltransferase family. RlmD subfamily.

It catalyses the reaction uridine(1939) in 23S rRNA + S-adenosyl-L-methionine = 5-methyluridine(1939) in 23S rRNA + S-adenosyl-L-homocysteine + H(+). Catalyzes the formation of 5-methyl-uridine at position 1939 (m5U1939) in 23S rRNA. In Polynucleobacter necessarius subsp. necessarius (strain STIR1), this protein is 23S rRNA (uracil(1939)-C(5))-methyltransferase RlmD.